The primary structure comprises 232 residues: Phosphatidylserine decarboxylase proenzyme (232 aa).

Ser-190 (schiff-base intermediate with substrate; via pyruvic acid) is an active-site residue. Pyruvic acid (Ser); by autocatalysis is present on Ser-190.

Belongs to the phosphatidylserine decarboxylase family. PSD-A subfamily. Heterodimer of a large membrane-associated beta subunit and a small pyruvoyl-containing alpha subunit. Pyruvate serves as cofactor. Post-translationally, is synthesized initially as an inactive proenzyme. Formation of the active enzyme involves a self-maturation process in which the active site pyruvoyl group is generated from an internal serine residue via an autocatalytic post-translational modification. Two non-identical subunits are generated from the proenzyme in this reaction, and the pyruvate is formed at the N-terminus of the alpha chain, which is derived from the carboxyl end of the proenzyme. The post-translation cleavage follows an unusual pathway, termed non-hydrolytic serinolysis, in which the side chain hydroxyl group of the serine supplies its oxygen atom to form the C-terminus of the beta chain, while the remainder of the serine residue undergoes an oxidative deamination to produce ammonia and the pyruvoyl prosthetic group on the alpha chain.

It localises to the cell membrane. It catalyses the reaction a 1,2-diacyl-sn-glycero-3-phospho-L-serine + H(+) = a 1,2-diacyl-sn-glycero-3-phosphoethanolamine + CO2. The protein operates within phospholipid metabolism; phosphatidylethanolamine biosynthesis; phosphatidylethanolamine from CDP-diacylglycerol: step 2/2. Catalyzes the formation of phosphatidylethanolamine (PtdEtn) from phosphatidylserine (PtdSer). The sequence is that of Phosphatidylserine decarboxylase proenzyme from Allorhizobium ampelinum (strain ATCC BAA-846 / DSM 112012 / S4) (Agrobacterium vitis (strain S4)).